A 55-amino-acid chain; its full sequence is Large ribosomal subunit protein bL33 (55 aa).

Belongs to the bacterial ribosomal protein bL33 family.

This Rhodopseudomonas palustris (strain BisB5) protein is Large ribosomal subunit protein bL33.